The following is a 138-amino-acid chain: Small ribosomal subunit protein uS11c (138 aa).

The disordered stretch occupies residues 1–24 (MAKAIPRSGSRRSGRIGSRKSTRR). A compositionally biased stretch (basic residues) spans 9–24 (GSRRSGRIGSRKSTRR).

Belongs to the universal ribosomal protein uS11 family. In terms of assembly, part of the 30S ribosomal subunit.

The protein resides in the plastid. It is found in the chloroplast. The protein is Small ribosomal subunit protein uS11c of Panax ginseng (Korean ginseng).